The primary structure comprises 178 residues: ATP synthase subunit b (178 aa).

Residues 30–50 traverse the membrane as a helical segment; the sequence is FFFVLAIFLIVLAVIGTFVVP.

It belongs to the ATPase B chain family. As to quaternary structure, F-type ATPases have 2 components, F(1) - the catalytic core - and F(0) - the membrane proton channel. F(1) has five subunits: alpha(3), beta(3), gamma(1), delta(1), epsilon(1). F(0) has three main subunits: a(1), b(2) and c(10-14). The alpha and beta chains form an alternating ring which encloses part of the gamma chain. F(1) is attached to F(0) by a central stalk formed by the gamma and epsilon chains, while a peripheral stalk is formed by the delta and b chains.

It is found in the cell membrane. Functionally, f(1)F(0) ATP synthase produces ATP from ADP in the presence of a proton or sodium gradient. F-type ATPases consist of two structural domains, F(1) containing the extramembraneous catalytic core and F(0) containing the membrane proton channel, linked together by a central stalk and a peripheral stalk. During catalysis, ATP synthesis in the catalytic domain of F(1) is coupled via a rotary mechanism of the central stalk subunits to proton translocation. Its function is as follows. Component of the F(0) channel, it forms part of the peripheral stalk, linking F(1) to F(0). The chain is ATP synthase subunit b from Mycobacterium avium (strain 104).